The following is a 101-amino-acid chain: Large ribosomal subunit protein uL23 (101 aa).

The protein belongs to the universal ribosomal protein uL23 family. In terms of assembly, part of the 50S ribosomal subunit. Contacts protein L29, and trigger factor when it is bound to the ribosome.

In terms of biological role, one of the early assembly proteins it binds 23S rRNA. One of the proteins that surrounds the polypeptide exit tunnel on the outside of the ribosome. Forms the main docking site for trigger factor binding to the ribosome. The polypeptide is Large ribosomal subunit protein uL23 (Wigglesworthia glossinidia brevipalpis).